A 204-amino-acid polypeptide reads, in one-letter code: Rho GDP-dissociation inhibitor 1 (204 aa).

The disordered stretch occupies residues 1 to 36 (MAEQEPTAEQLAQIAAENEEDEHSVNYKPPAQKSIQ). Ala-2 carries the post-translational modification N-acetylalanine. Ser-34 carries the post-translational modification Phosphoserine. Lys-43 bears the N6-acetyllysine mark. Ser-47 carries the post-translational modification Phosphoserine. Residues 66-83 (NVPNVVVTRLTLVCSTAP) are hydrophobic. At Ser-101 the chain carries Phosphoserine; by PKA. Lys-105 is subject to N6-acetyllysine. Ser-115 is subject to Phosphoserine; by PKC. Lys-127 bears the N6-acetyllysine mark. Glycyl lysine isopeptide (Lys-Gly) (interchain with G-Cter in SUMO1); alternate cross-links involve residues Lys-138 and Lys-141. Residues Lys-138 and Lys-141 each participate in a glycyl lysine isopeptide (Lys-Gly) (interchain with G-Cter in SUMO2); alternate cross-link. Lys-141 carries the N6-acetyllysine; alternate modification. Lys-141 bears the N6-succinyllysine; alternate mark. At Lys-178 the chain carries N6-acetyllysine.

Belongs to the Rho GDI family. As to quaternary structure, monomer. Interacts with FER. Interacts with PLXNB3. Forms a heterodimer with RAC1. Interacts with RHOA, the affinity is increased by three orders of magnitude when RHOA is prenylated. Interacts with PSMD10; the interaction increases ARHGDIA association with RHOA, leading to ARHGDIA-mediated inactivation of RHOA and ROCK and prolonged AKT activation. Interacts with KANK2; the interaction is direct and may regulate the interaction of ARHGDIA with RHOA, RAC1 and CDC42. Interacts with RHOC. Interacts with CDC42. Interacts with NGFR (via death domain); NGFR binding decreases the affinity for RHOA. Brain, lung, thymus, spleen, small intestine, and kidney, and weakly in heart and liver.

Its subcellular location is the cytoplasm. In terms of biological role, controls Rho proteins homeostasis. Regulates the GDP/GTP exchange reaction of the Rho proteins by inhibiting the dissociation of GDP from them, and the subsequent binding of GTP to them. Retains Rho proteins such as CDC42, RAC1 and RHOA in an inactive cytosolic pool, regulating their stability and protecting them from degradation. Actively involved in the recycling and distribution of activated Rho GTPases in the cell, mediates extraction from membranes of both inactive and activated molecules due its exceptionally high affinity for prenylated forms. Through the modulation of Rho proteins, may play a role in cell motility regulation. In glioma cells, inhibits cell migration and invasion by mediating the signals of SEMA5A and PLXNB3 that lead to inactivation of RAC1. The protein is Rho GDP-dissociation inhibitor 1 (ARHGDIA) of Bos taurus (Bovine).